Reading from the N-terminus, the 161-residue chain is 2-C-methyl-D-erythritol 2,4-cyclodiphosphate synthase (161 aa).

Residues Asp-14 and His-16 each coordinate a divalent metal cation. Residues 14 to 16 (DVH) and 40 to 41 (HS) each bind 4-CDP-2-C-methyl-D-erythritol 2-phosphate. His-48 contributes to the a divalent metal cation binding site. 4-CDP-2-C-methyl-D-erythritol 2-phosphate contacts are provided by residues 62–64 (DLG), Phe-142, and Arg-145.

The protein belongs to the IspF family. Homotrimer. Requires a divalent metal cation as cofactor.

It carries out the reaction 4-CDP-2-C-methyl-D-erythritol 2-phosphate = 2-C-methyl-D-erythritol 2,4-cyclic diphosphate + CMP. The protein operates within isoprenoid biosynthesis; isopentenyl diphosphate biosynthesis via DXP pathway; isopentenyl diphosphate from 1-deoxy-D-xylulose 5-phosphate: step 4/6. Involved in the biosynthesis of isopentenyl diphosphate (IPP) and dimethylallyl diphosphate (DMAPP), two major building blocks of isoprenoid compounds. Catalyzes the conversion of 4-diphosphocytidyl-2-C-methyl-D-erythritol 2-phosphate (CDP-ME2P) to 2-C-methyl-D-erythritol 2,4-cyclodiphosphate (ME-CPP) with a corresponding release of cytidine 5-monophosphate (CMP). The chain is 2-C-methyl-D-erythritol 2,4-cyclodiphosphate synthase from Acidothermus cellulolyticus (strain ATCC 43068 / DSM 8971 / 11B).